We begin with the raw amino-acid sequence, 282 residues long: HTH-type transcriptional activator RhaR (282 aa).

The region spanning 179-277 is the HTH araC/xylS-type domain; the sequence is DKLITALAGS…GMTPVQWRHR (99 aa). 2 DNA-binding regions (H-T-H motif) span residues 196-217 and 244-267; these read EKFC…RTQT and VSEV…NREV.

As to quaternary structure, binds DNA as a dimer.

It localises to the cytoplasm. Functionally, activates expression of the rhaSR operon in response to L-rhamnose. The sequence is that of HTH-type transcriptional activator RhaR from Enterobacter sp. (strain 638).